The primary structure comprises 345 residues: MLSSVPHRKTWNKSKKTVKVTRSYPTFPSLNAWEEFRGLFPVDGEPNPGVGLGVEEGLLGQMVHSPEFNLFPESVVFESNFVQVRKGRDWIDIYKTYNTMALGVTSSVPCLPLPNILLMASVKWHHGQNQTWNKPSTAPKIILKRILPLKFVELQVSDHLQRVLRLRTVTEKIYYLKLHPDHPKTVFHFWIRLIQILQKGLSITTKDPRILVTHCLVPKNSCSPSGDSQLVQKKPQASQPSESLMQLMAKGESEALCQIFVDLHQHNLFSSRSSKKTENKKDSSGKKTSPSEDSIPCTRDLSWRDSFTYGEWERENPSGPQSLSLLSTLAASTGPQLAPLIGSSI.

2 disordered regions span residues 222 to 241 (CSPSGDSQLVQKKPQASQPS) and 271 to 299 (SRSSKKTENKKDSSGKKTSPSEDSIPCTR). A compositionally biased stretch (basic and acidic residues) spans 275-285 (KKTENKKDSSG).

The protein belongs to the GARIN family.

It localises to the golgi apparatus. Its function is as follows. RAB2B effector protein required for accurate acrosome formation and normal male fertility. In complex with RAB2A/RAB2B, seems to suppress excessive vesicle trafficking during acrosome formation. This Bos taurus (Bovine) protein is Golgi-associated RAB2 interactor protein 1B (GARIN1B).